We begin with the raw amino-acid sequence, 147 residues long: Lysozyme C-3 (147 aa).

The N-terminal stretch at 1 to 18 (MKALIILGFLFLSVAVQG) is a signal peptide. The C-type lysozyme domain maps to 19–147 (KVFERCELAR…VSSYVQGCTL (129 aa)). 4 cysteine pairs are disulfide-bonded: Cys24–Cys145, Cys48–Cys133, Cys83–Cys99, and Cys95–Cys113. Catalysis depends on residues Glu53 and Asp71.

This sequence belongs to the glycosyl hydrolase 22 family. Monomer. Stomach-specific.

The enzyme catalyses Hydrolysis of (1-&gt;4)-beta-linkages between N-acetylmuramic acid and N-acetyl-D-glucosamine residues in a peptidoglycan and between N-acetyl-D-glucosamine residues in chitodextrins.. In terms of biological role, lysozymes have primarily a bacteriolytic function; those in tissues and body fluids are associated with the monocyte-macrophage system and enhance the activity of immunoagents. In Bos taurus (Bovine), this protein is Lysozyme C-3 (LYZ3).